The primary structure comprises 695 residues: Probable Rho-GTPase-activating protein 7 (695 aa).

Over residues 1–11 (MLSAPSSSTTP) the composition is skewed to low complexity. A disordered region spans residues 1-26 (MLSAPSSSTTPASPPTSPPNTTSSDD). The F-BAR domain maps to 33-307 (PKVEAILNSE…ALDNINANTD (275 aa)). A disordered region spans residues 320–499 (EDNKNPTDAS…SVSPQPSSPT (180 aa)). Composition is skewed to polar residues over residues 336–348 (PPSSYGTGSSAGK) and 366–382 (PLQNTNPAPSTFPNPSV). 3 stretches are compositionally biased toward low complexity: residues 383-432 (ASPA…RTSS), 458-467 (PIQTTTIQTS), and 488-499 (PTSVSPQPSSPT). Phosphoserine occurs at positions 496 and 497. Residues 506–692 (ARLDAIILRE…ILIDYCFTIF (187 aa)) form the Rho-GAP domain.

This Schizosaccharomyces pombe (strain 972 / ATCC 24843) (Fission yeast) protein is Probable Rho-GTPase-activating protein 7 (rga7).